The following is a 49-amino-acid chain: uncharacterized protein (49 aa).

An N-terminal signal peptide occupies residues 1–22 (MVFLLFLSFVLSSIFLVPLVYM).

The protein resides in the secreted. This is an uncharacterized protein from Dictyostelium discoideum (Social amoeba).